The sequence spans 273 residues: Proteasome subunit beta type-7-A (273 aa).

The propeptide at 1 to 37 is removed in mature form; it reads MSQSTVDVPPKGGFSFDLCKRNDMLTQKGLKAPSFLK. Catalysis depends on threonine 40, which acts as the Nucleophile.

Belongs to the peptidase T1B family. In terms of assembly, component of the 20S core complex of the 26S proteasome. The 26S proteasome is composed of a core protease (CP), known as the 20S proteasome, capped at one or both ends by the 19S regulatory particle (RP/PA700). The 20S proteasome core is composed of 28 subunits that are arranged in four stacked rings, resulting in a barrel-shaped structure. The two end rings are each formed by seven alpha subunits, and the two central rings are each formed by seven beta subunits. The catalytic chamber with the active sites is on the inside of the barrel.

It is found in the cytoplasm. Its subcellular location is the nucleus. The catalysed reaction is Cleavage of peptide bonds with very broad specificity.. Functionally, the proteasome is a multicatalytic proteinase complex which is characterized by its ability to cleave peptides with Arg, Phe, Tyr, Leu, and Glu adjacent to the leaving group at neutral or slightly basic pH. The proteasome has an ATP-dependent proteolytic activity. This chain is Proteasome subunit beta type-7-A (PBB1), found in Arabidopsis thaliana (Mouse-ear cress).